The sequence spans 78 residues: Large ribosomal subunit protein bL28 (78 aa).

The disordered stretch occupies residues 1–30; the sequence is MAAHCQVTGAQPGFGHSISHSHRRTKRRWN. The segment covering 19–30 has biased composition (basic residues); the sequence is SHSHRRTKRRWN.

This sequence belongs to the bacterial ribosomal protein bL28 family.

The polypeptide is Large ribosomal subunit protein bL28 (Kocuria rhizophila (strain ATCC 9341 / DSM 348 / NBRC 103217 / DC2201)).